We begin with the raw amino-acid sequence, 124 residues long: Putative calmodulin-3 (124 aa).

EF-hand domains are found at residues 1 to 18, 19 to 54, 56 to 91, and 92 to 124; these read GCITTKELGTVMRSLGQN, PTEAELQDMINEVDADGNGTIDFPEFLNLMARKIKD, DFEEELKEAFRVFDKDRNGFISAAELPHVMTNLGEK, and LTDEEVDEIIREADVDCDGQINYDEFVKVMMAK. Cys2, Glu7, Asp32, Asp34, Asn36, Thr38, Glu43, Asp69, Asp71, Asn73, and Glu80 together coordinate Ca(2+). N6,N6,N6-trimethyllysine is present on Lys91. Ca(2+)-binding residues include Asp105, Asp107, Asp109, Gln111, and Glu116.

This sequence belongs to the calmodulin family. As to expression, not detected in the organs tested.

Calmodulin mediates the control of a large number of enzymes, ion channels and other proteins by Ca(2+). Among the enzymes to be stimulated by the calmodulin-Ca(2+) complex are a number of protein kinases and phosphatases. The protein is Putative calmodulin-3 (PCM3) of Solanum tuberosum (Potato).